The chain runs to 194 residues: Methylthioribulose-1-phosphate dehydratase (194 aa).

Positions 84 and 86 each coordinate Zn(2+).

It belongs to the aldolase class II family. MtnB subfamily. Requires Zn(2+) as cofactor.

It carries out the reaction 5-(methylsulfanyl)-D-ribulose 1-phosphate = 5-methylsulfanyl-2,3-dioxopentyl phosphate + H2O. It functions in the pathway amino-acid biosynthesis; L-methionine biosynthesis via salvage pathway; L-methionine from S-methyl-5-thio-alpha-D-ribose 1-phosphate: step 2/6. Catalyzes the dehydration of methylthioribulose-1-phosphate (MTRu-1-P) into 2,3-diketo-5-methylthiopentyl-1-phosphate (DK-MTP-1-P). In Cronobacter sakazakii (Enterobacter sakazakii), this protein is Methylthioribulose-1-phosphate dehydratase.